The chain runs to 209 residues: Uracil phosphoribosyltransferase (209 aa).

Residues Arg-79, Arg-104, and 131–139 contribute to the 5-phospho-alpha-D-ribose 1-diphosphate site; that span reads DPMLATGGS. Uracil is bound by residues Ile-194 and 199-201; that span reads GDA. Residue Asp-200 coordinates 5-phospho-alpha-D-ribose 1-diphosphate.

The protein belongs to the UPRTase family. Mg(2+) serves as cofactor.

It carries out the reaction UMP + diphosphate = 5-phospho-alpha-D-ribose 1-diphosphate + uracil. Its pathway is pyrimidine metabolism; UMP biosynthesis via salvage pathway; UMP from uracil: step 1/1. Its activity is regulated as follows. Allosterically activated by GTP. Its function is as follows. Catalyzes the conversion of uracil and 5-phospho-alpha-D-ribose 1-diphosphate (PRPP) to UMP and diphosphate. This chain is Uracil phosphoribosyltransferase, found in Bacillus pumilus (strain SAFR-032).